The chain runs to 700 residues: Choline transporter-like protein 5-B (700 aa).

The Cytoplasmic segment spans residues Gly1 to Asp4. The helical transmembrane segment at Val5–Ala25 threads the bilayer. At Trp26–Trp209 the chain is on the extracellular side. N-linked (GlcNAc...) asparagine glycans are attached at residues Asn157 and Asn164. Residues Phe210–Leu230 traverse the membrane as a helical segment. Topologically, residues Arg231–Thr233 are cytoplasmic. Residues Ala234–Trp254 form a helical membrane-spanning segment. Residues His255–Trp292 are Extracellular-facing. The helical transmembrane segment at Leu293–Leu313 threads the bilayer. Residues Arg314–Pro341 lie on the Cytoplasmic side of the membrane. Residues Ile342 to Leu362 form a helical membrane-spanning segment. At Ala363–Leu432 the chain is on the extracellular side. Residues Asn383 and Asn395 are each glycosylated (N-linked (GlcNAc...) asparagine). A helical membrane pass occupies residues Trp433–Trp455. Residues Ala456–Ser482 lie on the Cytoplasmic side of the membrane. The chain crosses the membrane as a helical span at residues Leu483–Leu503. The Extracellular portion of the chain corresponds to Asp504–Tyr541. The helical transmembrane segment at Ile542–Leu562 threads the bilayer. Residues Met563–Asp577 are Cytoplasmic-facing. A helical transmembrane segment spans residues Phe578 to Phe598. The Extracellular portion of the chain corresponds to Phe599 to Tyr616. The helical transmembrane segment at Trp617 to Val637 threads the bilayer. At Tyr638–Arg687 the chain is on the cytoplasmic side. The disordered stretch occupies residues Lys676–His700. The span at Lys677–Lys692 shows a compositional bias: basic residues.

This sequence belongs to the CTL (choline transporter-like) family.

It localises to the cell membrane. The enzyme catalyses choline(out) + n H(+)(in) = choline(in) + n H(+)(out). In terms of biological role, choline/H+ antiporter. The sequence is that of Choline transporter-like protein 5-B (slc44a5b) from Danio rerio (Zebrafish).